A 606-amino-acid chain; its full sequence is Endonuclease 8-like 3 (606 aa).

Valine 2 (schiff-base intermediate with DNA; via amino nitrogen) is an active-site residue. Residues asparagine 193 and arginine 272 each coordinate DNA. Residues 248–282 form an FPG-type zinc finger; the sequence is KVYKRPNCDQCHSKITVCRFGENSRMTYFCPHCQK. Residues 318 to 347 form a RanBP2-type zinc finger; the sequence is SEEQWSCVVCTLINRPSAKACDACLTTRPL. Serine 451 is subject to Phosphoserine. Residues 479 to 494 show a composition bias toward polar residues; sequence KSYNSGLSNSELQTNR. Positions 479–506 are disordered; sequence KSYNSGLSNSELQTNRTRGHHSKSDGSP. Cysteine 508, histidine 511, cysteine 534, cysteine 542, cysteine 555, histidine 557, cysteine 580, and cysteine 588 together coordinate Zn(2+). GRF-type zinc fingers lie at residues 508–551 and 555–597; these read CKMH…ADLS and CRHG…AENG.

Belongs to the FPG family. As to expression, expressed in testis, thymus, spleen and bone marrow. In young mice, expressed at higher levels in thymocytes than splenocytes. At 12 dpc, abundant in the subventricular zone (SVZ) of the lateral ventricles. At 17.5 dpc and P0, expression is limited to distinct cells in the cortical SVZ, in cells of the secondary matrix, the dentate gyrus migratory route and the dentate gyrus.

It localises to the nucleus. It is found in the chromosome. It catalyses the reaction 2'-deoxyribonucleotide-(2'-deoxyribose 5'-phosphate)-2'-deoxyribonucleotide-DNA = a 3'-end 2'-deoxyribonucleotide-(2,3-dehydro-2,3-deoxyribose 5'-phosphate)-DNA + a 5'-end 5'-phospho-2'-deoxyribonucleoside-DNA + H(+). DNA glycosylase which prefers single-stranded DNA (ssDNA), or partially ssDNA structures such as bubble and fork structures, to double-stranded DNA (dsDNA). Mediates interstrand cross-link repair in response to replication stress: acts by mediating DNA glycosylase activity, cleaving one of the two N-glycosyl bonds comprising the interstrand cross-link, which avoids the formation of a double-strand break but generates an abasic site that is bypassed by translesion synthesis polymerases. In vitro, displays strong glycosylase activity towards the hydantoin lesions spiroiminodihydantoin (Sp) and guanidinohydantoin (Gh) in both ssDNA and dsDNA; also recognizes FapyA, FapyG, 5-OHU, 5-OHC, 5-OHMH, Tg and 8-oxoA lesions in ssDNA. No activity on 8-oxoG detected. Also shows weak DNA-(apurinic or apyrimidinic site) lyase activity. In vivo, appears to be the primary enzyme involved in removing Sp and Gh from ssDNA in neonatal tissues. This chain is Endonuclease 8-like 3 (Neil3), found in Mus musculus (Mouse).